The following is a 1735-amino-acid chain: Inactive tyrosine-protein kinase PEAK1 (1735 aa).

Disordered stretches follow at residues Leu26–Ala66 and Leu111–Asn145. Composition is skewed to polar residues over residues Leu111 to Glu121 and Asp130 to Asn145. Phosphoserine is present on Ser282. Disordered regions lie at residues Asn324 to Val410, Gly491 to Gly514, and Ser537 to Ile580. A compositionally biased stretch (low complexity) spans Ser325–Ser336. The span at Thr337–Val365 shows a compositional bias: polar residues. The segment covering Asn367–Ser378 has biased composition (low complexity). Positions Thr384–Gly393 are enriched in polar residues. A compositionally biased stretch (low complexity) spans Ser498–Pro509. 3 positions are modified to phosphoserine: Ser537, Ser569, and Ser584. Polar residues predominate over residues Ala566–Ile580. A phosphotyrosine mark is found at Tyr632 and Tyr638. Ser645 carries the phosphoserine modification. A Phosphotyrosine modification is found at Tyr662. 3 disordered regions span residues Glu663 to Ala762, Pro800 to Ala919, and Arg1019 to Tyr1097. 3 stretches are compositionally biased toward polar residues: residues Gln704–Thr735, Ala745–Ser757, and Leu819–Ala839. Residues Ser824 and Ser825 each carry the phosphoserine modification. A compositionally biased stretch (low complexity) spans Thr847–Ser863. The span at Glu864–Arg873 shows a compositional bias: pro residues. The span at Tyr879–Ser901 shows a compositional bias: polar residues. Ser897 carries the phosphoserine modification. Composition is skewed to basic and acidic residues over residues Thr902–Ala919 and Ala1037–Arg1055. The segment covering Glu1076–Asp1086 has biased composition (acidic residues). Position 1141 is a phosphothreonine (Thr1141). Tyr1177 is modified (phosphotyrosine). The tract at residues Glu1274 to Ala1300 is required for homodimerization. Residues Gln1302–Phe1664 form the Protein kinase domain. Ser1363 carries the post-translational modification Phosphoserine. The tract at residues Trp1394 to Arg1445 is disordered. A required for homodimerization region spans residues Pro1659 to Leu1732.

It belongs to the protein kinase superfamily. As to quaternary structure, homodimer. Interacts with BCAR1 and CRK. Interacts with PRAG1. Interacts (when phosphorylated at Tyr-1177) with SHC1 (via PID domain). Found in a complex with PPP1CA, PPP1CC and SHC1. Interacts (when phosphorylated at Tyr-632) with tensin TNS3 (when phosphorylated on the SH2 domain); TNS3 also interacts with integrins ITGB1, ITGB3 and ITGB5 and mediates their association with PEAK1. In terms of processing, phosphorylated on tyrosine in a CSK-dependent manner in response to adhesion to fibronectin and to EGF stimulation. Phosphorylation at Tyr-662 by a Src family kinase controls subcellular localization to focal adhesion and focal adhesion dynamics. Phosphorylation at Tyr-1177 is essential for binding to SHC1. Phosphorylation at Tyr-632 promotes interaction with tensin TNS3.

It localises to the cytoplasm. It is found in the cytoskeleton. Its subcellular location is the cell junction. The protein resides in the focal adhesion. Functionally, probable catalytically inactive kinase. Scaffolding protein that regulates the cytoskeleton to control cell spreading and migration by modulating focal adhesion dynamics. Acts as a scaffold for mediating EGFR signaling. The sequence is that of Inactive tyrosine-protein kinase PEAK1 (Peak1) from Mus musculus (Mouse).